Reading from the N-terminus, the 188-residue chain is Putative protein SSX6 (188 aa).

Disordered stretches follow at residues 1–22 (MNGD…EKRS) and 74–188 (KRAT…EDDK). One can recognise a KRAB-related domain in the interval 20–83 (KRSKAFDDIA…KRATDSQRND (64 aa)). Composition is skewed to basic and acidic residues over residues 75-96 (RATD…EVER) and 112-122 (MPEKPAEEGSD). At Ser123 the chain carries Phosphoserine. Residues 147-156 (SSEKIHERSG) are compositionally biased toward basic and acidic residues. Basic residues predominate over residues 157–170 (PKRGKHAWTHRLRE). A compositionally biased stretch (acidic residues) spans 179 to 188 (EISDPEEDDK).

The protein belongs to the SSX family. In terms of tissue distribution, not detected in any normal tissues. Expressed in a melanoma cell line.

Its function is as follows. Could act as a modulator of transcription. The chain is Putative protein SSX6 from Homo sapiens (Human).